The primary structure comprises 71 residues: Large ribosomal subunit protein bL31 (71 aa).

Positions 16, 18, 37, and 40 each coordinate Zn(2+).

The protein belongs to the bacterial ribosomal protein bL31 family. Type A subfamily. In terms of assembly, part of the 50S ribosomal subunit. Zn(2+) is required as a cofactor.

Its function is as follows. Binds the 23S rRNA. The protein is Large ribosomal subunit protein bL31 of Pseudomonas putida (strain W619).